We begin with the raw amino-acid sequence, 337 residues long: Ornithine carbamoyltransferase (337 aa).

Residues 56 to 59 (STRT), Gln83, Arg107, and 134 to 137 (HPTQ) each bind carbamoyl phosphate. L-ornithine contacts are provided by residues Asn168, Asp232, and 236–237 (SM). Carbamoyl phosphate-binding positions include 274–275 (CL) and Arg320.

It belongs to the aspartate/ornithine carbamoyltransferase superfamily. OTCase family.

Its subcellular location is the cytoplasm. The catalysed reaction is carbamoyl phosphate + L-ornithine = L-citrulline + phosphate + H(+). Its pathway is amino-acid biosynthesis; L-arginine biosynthesis; L-arginine from L-ornithine and carbamoyl phosphate: step 1/3. Reversibly catalyzes the transfer of the carbamoyl group from carbamoyl phosphate (CP) to the N(epsilon) atom of ornithine (ORN) to produce L-citrulline. The chain is Ornithine carbamoyltransferase (argI) from Shigella flexneri.